The chain runs to 60 residues: Large ribosomal subunit protein uL30 (60 aa).

The protein belongs to the universal ribosomal protein uL30 family. In terms of assembly, part of the 50S ribosomal subunit.

The sequence is that of Large ribosomal subunit protein uL30 from Aromatoleum aromaticum (strain DSM 19018 / LMG 30748 / EbN1) (Azoarcus sp. (strain EbN1)).